Reading from the N-terminus, the 407-residue chain is Probable NADPH dehydrogenase (407 aa).

FMN-binding residues include threonine 49 and glutamine 124. Tyrosine 206 serves as the catalytic Proton donor. Arginine 254 and arginine 357 together coordinate FMN.

This sequence belongs to the NADH:flavin oxidoreductase/NADH oxidase family. The cofactor is FMN.

It catalyses the reaction A + NADPH + H(+) = AH2 + NADP(+). In terms of biological role, oxidoreductase that binds mammalian estrogens with high affinity. The polypeptide is Probable NADPH dehydrogenase (Candida albicans (strain SC5314 / ATCC MYA-2876) (Yeast)).